The sequence spans 1783 residues: Trans-splicing factor Raa3, chloroplastic (1783 aa).

The N-terminal 40 residues, 1–40 (MKADLATAKGSSPAFSAPRTYRARLLSRCLNKCFNTVLVS), are a transit peptide targeting the chloroplast. Disordered regions lie at residues 97–378 (ATTH…VGVN), 420–484 (ATSA…VAAQ), 563–610 (ARVG…SATK), 652–709 (STEP…SPAA), 918–971 (AAPT…QRAS), 1395–1427 (RDAKRHVRQSAAAAAAAAAAAQDQRQEQHQQHQ), 1476–1506 (PAPAHMQQQPQSSGTGCQKSRRRRMRYRRSR), and 1620–1639 (VKGRGRGRRTAARATTDVQG). Positions 105–118 (DSGGQGPAAAGGRG) are enriched in gly residues. Composition is skewed to low complexity over residues 126-157 (QAAASAATTVSAAPQTGATKPAATAKTTPQRP), 186-205 (AVDAASDAAPDVAAASPAPA), and 224-242 (AGKPRASGRAPAAPGVGPQ). Positions 256 to 273 (DESHMGLTHRDQGHDERI) are enriched in basic and acidic residues. A compositionally biased stretch (low complexity) spans 277–289 (AGEAWKAGAVAAP). Residues 307–316 (LASSALGTHS) are compositionally biased toward polar residues. 7 stretches are compositionally biased toward low complexity: residues 343-374 (SGSSSSSSGRNSSSNSNTSTSSTSNGVTITSN), 420-436 (ATSAASSSTSSASSSSS), 577-599 (RPVQGQSGQVPQVGQGPVQSQPG), 655-669 (PLAASAPTTSLASAS), 676-709 (SSSNAHSSAAASEAAAGTVRAPTDTAAPAASPAA), 928-970 (SAAA…PQRA), and 1403-1417 (QSAAAAAAAAAAAQD). Composition is skewed to basic residues over residues 1494 to 1506 (KSRRRRMRYRRSR) and 1620 to 1630 (VKGRGRGRRTA). The 60-residue stretch at 1713–1772 (LAVGAAAGGAVIRNSRWLLSGAGALRRRLLTHAGWLVVPVRERQWKDLRSAEQQRRVVRE) folds into the RAP domain.

In terms of assembly, part of a 1700 kDa complex that includes the precursor RNA to exon 1 and the tscA RNA.

Its subcellular location is the plastid. The protein localises to the chloroplast stroma. Functionally, required for trans-splicing of exons 1 and 2 of the chloroplast encoded psaA mRNA (a group II intron). May be required for stability of the chloroplast RNA-protein complex in which it is found. This is Trans-splicing factor Raa3, chloroplastic (RAA3) from Chlamydomonas reinhardtii (Chlamydomonas smithii).